The chain runs to 444 residues: Multidrug resistance protein MdtA (444 aa).

Positions 1 to 20 (MKSQSKRTSRLFVFVGVVVA) are cleaved as a signal peptide. A compositionally biased stretch (polar residues) spans 37 to 52 (NNTSGAQQSARGQDTS). Disordered stretches follow at residues 37–60 (NNTS…RNTP) and 398–444 (TPRS…AEKS). Positions 409 to 419 (ASAEKAAAEAE) are enriched in low complexity. A compositionally biased stretch (polar residues) spans 435–444 (ARSTTAAEKS).

The protein belongs to the membrane fusion protein (MFP) (TC 8.A.1) family. Part of a tripartite efflux system composed of MdtA, MdtB and MdtC.

The protein localises to the cell inner membrane. In Yersinia pseudotuberculosis serotype O:3 (strain YPIII), this protein is Multidrug resistance protein MdtA.